The following is a 251-amino-acid chain: 4-hydroxy-tetrahydrodipicolinate reductase (251 aa).

NAD(+) is bound by residues 8 to 13 (GAKGRM), 76 to 78 (GTT), and 106 to 109 (APNF). Catalysis depends on His-136, which acts as the Proton donor/acceptor. Residue His-137 participates in (S)-2,3,4,5-tetrahydrodipicolinate binding. Lys-140 (proton donor) is an active-site residue. (S)-2,3,4,5-tetrahydrodipicolinate is bound at residue 146 to 147 (GT).

Belongs to the DapB family.

The protein localises to the cytoplasm. It carries out the reaction (S)-2,3,4,5-tetrahydrodipicolinate + NAD(+) + H2O = (2S,4S)-4-hydroxy-2,3,4,5-tetrahydrodipicolinate + NADH + H(+). It catalyses the reaction (S)-2,3,4,5-tetrahydrodipicolinate + NADP(+) + H2O = (2S,4S)-4-hydroxy-2,3,4,5-tetrahydrodipicolinate + NADPH + H(+). Its pathway is amino-acid biosynthesis; L-lysine biosynthesis via DAP pathway; (S)-tetrahydrodipicolinate from L-aspartate: step 4/4. Functionally, catalyzes the conversion of 4-hydroxy-tetrahydrodipicolinate (HTPA) to tetrahydrodipicolinate. The chain is 4-hydroxy-tetrahydrodipicolinate reductase from Bifidobacterium longum subsp. infantis (strain ATCC 15697 / DSM 20088 / JCM 1222 / NCTC 11817 / S12).